Reading from the N-terminus, the 493-residue chain is Accumulates dyads protein 4 (493 aa).

Interacts with CNM67, SPO21/MPC70 and NUD1.

It localises to the cytoplasm. The protein localises to the cytoskeleton. It is found in the microtubule organizing center. The protein resides in the spindle pole body. Its function is as follows. Involved in the pathway that organizes the shaping and sizing of the prospore membrane (PSM) during sporulation. May be required to stabilize the outer plaque of the spindle pole body (SPB). In Saccharomyces cerevisiae (strain ATCC 204508 / S288c) (Baker's yeast), this protein is Accumulates dyads protein 4 (ADY4).